Consider the following 181-residue polypeptide: 6,7-dimethyl-8-ribityllumazine synthase (181 aa).

5-amino-6-(D-ribitylamino)uracil contacts are provided by residues Y27, 58 to 60 (ALE), and 87 to 89 (CVI). 92 to 93 (ET) is a (2S)-2-hydroxy-3-oxobutyl phosphate binding site. The active-site Proton donor is the H95. N120 contacts 5-amino-6-(D-ribitylamino)uracil. R134 provides a ligand contact to (2S)-2-hydroxy-3-oxobutyl phosphate.

The protein belongs to the DMRL synthase family.

The catalysed reaction is (2S)-2-hydroxy-3-oxobutyl phosphate + 5-amino-6-(D-ribitylamino)uracil = 6,7-dimethyl-8-(1-D-ribityl)lumazine + phosphate + 2 H2O + H(+). It participates in cofactor biosynthesis; riboflavin biosynthesis; riboflavin from 2-hydroxy-3-oxobutyl phosphate and 5-amino-6-(D-ribitylamino)uracil: step 1/2. Functionally, catalyzes the formation of 6,7-dimethyl-8-ribityllumazine by condensation of 5-amino-6-(D-ribitylamino)uracil with 3,4-dihydroxy-2-butanone 4-phosphate. This is the penultimate step in the biosynthesis of riboflavin. The polypeptide is 6,7-dimethyl-8-ribityllumazine synthase (Methylobacterium sp. (strain 4-46)).